Reading from the N-terminus, the 149-residue chain is MRSVVQRVTQASVTVEGEVVGRIGAGLLVLFGVGRGDTEADLNWMVDKIAGLRLFEDGEGKMNRSVQDVGGEILMVSQFTLYGDCRKGKRPSFATAAPPETAGELFQQAVAKMRGYGLHVETGVFQAEMQVALVNDGPVTLLIDSEKNF.

The short motif at Gly137–Pro138 is the Gly-cisPro motif, important for rejection of L-amino acids element.

The protein belongs to the DTD family. As to quaternary structure, homodimer.

It localises to the cytoplasm. The catalysed reaction is glycyl-tRNA(Ala) + H2O = tRNA(Ala) + glycine + H(+). The enzyme catalyses a D-aminoacyl-tRNA + H2O = a tRNA + a D-alpha-amino acid + H(+). In terms of biological role, an aminoacyl-tRNA editing enzyme that deacylates mischarged D-aminoacyl-tRNAs. Also deacylates mischarged glycyl-tRNA(Ala), protecting cells against glycine mischarging by AlaRS. Acts via tRNA-based rather than protein-based catalysis; rejects L-amino acids rather than detecting D-amino acids in the active site. By recycling D-aminoacyl-tRNA to D-amino acids and free tRNA molecules, this enzyme counteracts the toxicity associated with the formation of D-aminoacyl-tRNA entities in vivo and helps enforce protein L-homochirality. The protein is D-aminoacyl-tRNA deacylase of Desulfitobacterium hafniense (strain DSM 10664 / DCB-2).